The following is a 379-amino-acid chain: Flap endonuclease 1 (379 aa).

The N-domain stretch occupies residues 1 to 105; sequence MGIKGLTKLL…QELAKRYSKR (105 aa). Position 34 (Asp-34) interacts with Mg(2+). Arg-71 contributes to the DNA binding site. Residues Asp-87, Glu-159, Glu-161, Asp-180, and Asp-182 each contribute to the Mg(2+) site. The interval 123–254 is I-domain; that stretch reads AIEKLSKRTV…QTALKLIRQH (132 aa). Glu-159 contributes to the DNA binding site. 2 residues coordinate DNA: Gly-232 and Asp-234. Asp-234 serves as a coordination point for Mg(2+). A disordered region spans residues 331-379; the sequence is AKNKSSQGRLESFFKPTATTSAPLKRKETSDKTSKAAANKKTKAGGKKK. Positions 336-344 are interaction with PCNA; it reads SQGRLESFF. The segment covering 355–364 has biased composition (basic and acidic residues); sequence KRKETSDKTS. The segment covering 368 to 379 has biased composition (basic residues); the sequence is ANKKTKAGGKKK.

Belongs to the XPG/RAD2 endonuclease family. FEN1 subfamily. Interacts with PCNA. Three molecules of FEN1 bind to one PCNA trimer with each molecule binding to one PCNA monomer. PCNA stimulates the nuclease activity without altering cleavage specificity. Requires Mg(2+) as cofactor. Phosphorylated. Phosphorylation upon DNA damage induces relocalization to the nuclear plasma.

The protein localises to the nucleus. It localises to the nucleolus. It is found in the nucleoplasm. The protein resides in the mitochondrion. In terms of biological role, structure-specific nuclease with 5'-flap endonuclease and 5'-3' exonuclease activities involved in DNA replication and repair. During DNA replication, cleaves the 5'-overhanging flap structure that is generated by displacement synthesis when DNA polymerase encounters the 5'-end of a downstream Okazaki fragment. It enters the flap from the 5'-end and then tracks to cleave the flap base, leaving a nick for ligation. Also involved in the long patch base excision repair (LP-BER) pathway, by cleaving within the apurinic/apyrimidinic (AP) site-terminated flap. Acts as a genome stabilization factor that prevents flaps from equilibrating into structures that lead to duplications and deletions. Also possesses 5'-3' exonuclease activity on nicked or gapped double-stranded DNA, and exhibits RNase H activity. Also involved in replication and repair of rDNA and in repairing mitochondrial DNA. The polypeptide is Flap endonuclease 1 (Zea mays (Maize)).